A 337-amino-acid chain; its full sequence is uncharacterized protein (337 aa).

The next 2 membrane-spanning stretches (helical) occupy residues 4 to 24 (FIFF…FSLI) and 26 to 46 (LLLW…LFVL).

This sequence belongs to the plectrovirus ORF2 family.

The protein localises to the host membrane. This is an uncharacterized protein from Spiroplasma virus SpV1-R8A2 B (SpV1).